Reading from the N-terminus, the 103-residue chain is Large ribosomal subunit protein bL21 (103 aa).

Belongs to the bacterial ribosomal protein bL21 family. As to quaternary structure, part of the 50S ribosomal subunit. Contacts protein L20.

Functionally, this protein binds to 23S rRNA in the presence of protein L20. This is Large ribosomal subunit protein bL21 from Marinobacter nauticus (strain ATCC 700491 / DSM 11845 / VT8) (Marinobacter aquaeolei).